Here is a 30-residue protein sequence, read N- to C-terminus: Kappa-sparatoxin-Hv1d (30 aa).

3 disulfides stabilise this stretch: C3–C17, C10–C22, and C16–C26.

In terms of tissue distribution, expressed by the venom gland.

It is found in the secreted. Functionally, inhibitor of voltage-gated potassium channels of the Kv4/KCND family. Blocks calcium channels (Cav). The protein is Kappa-sparatoxin-Hv1d of Heteropoda venatoria (Brown huntsman spider).